Consider the following 90-residue polypeptide: Phosphoribosyl-ATP pyrophosphatase (90 aa).

It belongs to the PRA-PH family.

Its subcellular location is the cytoplasm. It catalyses the reaction 1-(5-phospho-beta-D-ribosyl)-ATP + H2O = 1-(5-phospho-beta-D-ribosyl)-5'-AMP + diphosphate + H(+). It functions in the pathway amino-acid biosynthesis; L-histidine biosynthesis; L-histidine from 5-phospho-alpha-D-ribose 1-diphosphate: step 2/9. The protein is Phosphoribosyl-ATP pyrophosphatase of Streptomyces griseus subsp. griseus (strain JCM 4626 / CBS 651.72 / NBRC 13350 / KCC S-0626 / ISP 5235).